Consider the following 482-residue polypeptide: tRNA sulfurtransferase (482 aa).

The 105-residue stretch at 61 to 165 folds into the THUMP domain; the sequence is LAIRDALTRI…DDRLLLIKGR (105 aa). ATP contacts are provided by residues 183–184, lysine 265, glycine 287, and glutamine 296; that span reads LI. The cysteines at positions 344 and 456 are disulfide-linked. Residues 404-482 enclose the Rhodanese domain; that stretch reads FGPNDVILDI…GFANVKVYRP (79 aa). Cysteine 456 serves as the catalytic Cysteine persulfide intermediate.

The protein belongs to the ThiI family.

The protein resides in the cytoplasm. The enzyme catalyses [ThiI sulfur-carrier protein]-S-sulfanyl-L-cysteine + a uridine in tRNA + 2 reduced [2Fe-2S]-[ferredoxin] + ATP + H(+) = [ThiI sulfur-carrier protein]-L-cysteine + a 4-thiouridine in tRNA + 2 oxidized [2Fe-2S]-[ferredoxin] + AMP + diphosphate. The catalysed reaction is [ThiS sulfur-carrier protein]-C-terminal Gly-Gly-AMP + S-sulfanyl-L-cysteinyl-[cysteine desulfurase] + AH2 = [ThiS sulfur-carrier protein]-C-terminal-Gly-aminoethanethioate + L-cysteinyl-[cysteine desulfurase] + A + AMP + 2 H(+). The protein operates within cofactor biosynthesis; thiamine diphosphate biosynthesis. In terms of biological role, catalyzes the ATP-dependent transfer of a sulfur to tRNA to produce 4-thiouridine in position 8 of tRNAs, which functions as a near-UV photosensor. Also catalyzes the transfer of sulfur to the sulfur carrier protein ThiS, forming ThiS-thiocarboxylate. This is a step in the synthesis of thiazole, in the thiamine biosynthesis pathway. The sulfur is donated as persulfide by IscS. The protein is tRNA sulfurtransferase of Salmonella heidelberg (strain SL476).